Consider the following 282-residue polypeptide: Pantothenate synthetase (282 aa).

Methionine 30 to histidine 37 serves as a coordination point for ATP. The active-site Proton donor is histidine 37. Residue glutamine 61 coordinates (R)-pantoate. Glutamine 61 provides a ligand contact to beta-alanine. ATP is bound at residue glycine 149–aspartate 152. Position 155 (glutamine 155) interacts with (R)-pantoate. Residues alanine 178 and methionine 186 to arginine 189 contribute to the ATP site.

This sequence belongs to the pantothenate synthetase family. In terms of assembly, homodimer.

Its subcellular location is the cytoplasm. It carries out the reaction (R)-pantoate + beta-alanine + ATP = (R)-pantothenate + AMP + diphosphate + H(+). Its pathway is cofactor biosynthesis; (R)-pantothenate biosynthesis; (R)-pantothenate from (R)-pantoate and beta-alanine: step 1/1. Catalyzes the condensation of pantoate with beta-alanine in an ATP-dependent reaction via a pantoyl-adenylate intermediate. The chain is Pantothenate synthetase from Marinomonas sp. (strain MWYL1).